The following is a 291-amino-acid chain: 4-hydroxy-tetrahydrodipicolinate synthase (291 aa).

Residue T44 coordinates pyruvate. Catalysis depends on Y132, which acts as the Proton donor/acceptor. The Schiff-base intermediate with substrate role is filled by K160. Pyruvate is bound at residue I202.

This sequence belongs to the DapA family. Homotetramer; dimer of dimers.

Its subcellular location is the cytoplasm. It carries out the reaction L-aspartate 4-semialdehyde + pyruvate = (2S,4S)-4-hydroxy-2,3,4,5-tetrahydrodipicolinate + H2O + H(+). Its pathway is amino-acid biosynthesis; L-lysine biosynthesis via DAP pathway; (S)-tetrahydrodipicolinate from L-aspartate: step 3/4. Functionally, catalyzes the condensation of (S)-aspartate-beta-semialdehyde [(S)-ASA] and pyruvate to 4-hydroxy-tetrahydrodipicolinate (HTPA). This Sphingopyxis alaskensis (strain DSM 13593 / LMG 18877 / RB2256) (Sphingomonas alaskensis) protein is 4-hydroxy-tetrahydrodipicolinate synthase.